The following is a 336-amino-acid chain: Non-structural maintenance of chromosomes element 1 (336 aa).

The segment at 268-327 adopts an RING-type; atypical zinc-finger fold; sequence LNTCQNCHKLAIQGVRCGNESCREENEETGENSLSQIWHVDCFKHYITHVSKNCDRCGSS.

It belongs to the NSE1 family. As to quaternary structure, component of the Smc5-Smc6 complex which consists of KRE29, MMS21, NSE1, NSE3, NSE4, NSE5, SMC5 and SMC6. Interacts with SMC5 and SMC6. Interacts with NSE3.

It is found in the nucleus. The enzyme catalyses S-ubiquitinyl-[E2 ubiquitin-conjugating enzyme]-L-cysteine + [acceptor protein]-L-lysine = [E2 ubiquitin-conjugating enzyme]-L-cysteine + N(6)-ubiquitinyl-[acceptor protein]-L-lysine.. Functionally, acts in a DNA repair pathway for removal of UV-induced DNA damage that is distinct from classical nucleotide excision repair and in repair of ionizing radiation damage. Functions in homologous recombination repair of DNA double strand breaks and in recovery of stalled replication forks. The protein is Non-structural maintenance of chromosomes element 1 (NSE1) of Saccharomyces cerevisiae (strain ATCC 204508 / S288c) (Baker's yeast).